An 80-amino-acid polypeptide reads, in one-letter code: uncharacterized protein (80 aa).

It belongs to the BolA/IbaG family.

This is an uncharacterized protein from Buchnera aphidicola subsp. Acyrthosiphon pisum (strain APS) (Acyrthosiphon pisum symbiotic bacterium).